A 452-amino-acid chain; its full sequence is Phosphoglucosamine mutase (452 aa).

Serine 101 functions as the Phosphoserine intermediate in the catalytic mechanism. Serine 101, aspartate 241, aspartate 243, and aspartate 245 together coordinate Mg(2+). Serine 101 carries the phosphoserine modification.

Belongs to the phosphohexose mutase family. Mg(2+) is required as a cofactor. Activated by phosphorylation.

The catalysed reaction is alpha-D-glucosamine 1-phosphate = D-glucosamine 6-phosphate. Functionally, catalyzes the conversion of glucosamine-6-phosphate to glucosamine-1-phosphate. In Lactococcus lactis subsp. cremoris (strain MG1363), this protein is Phosphoglucosamine mutase.